The primary structure comprises 312 residues: Olfactory receptor 8H3 (312 aa).

Topologically, residues Met1–Met26 are extracellular. N-linked (GlcNAc...) asparagine glycosylation occurs at Asn6. A helical transmembrane segment spans residues Ala27 to Leu47. Residues Leu48–Gln55 are Cytoplasmic-facing. The helical transmembrane segment at Leu56–Thr76 threads the bilayer. Residues Val77–Ala99 are Extracellular-facing. A disulfide bond links Cys97 and Cys189. A helical transmembrane segment spans residues Gln100–Tyr120. Residues Asp121–Arg139 lie on the Cytoplasmic side of the membrane. The chain crosses the membrane as a helical span at residues Leu140 to Val160. The Extracellular portion of the chain corresponds to Val161 to Met197. Residues Leu198–Ser217 form a helical membrane-spanning segment. The Cytoplasmic portion of the chain corresponds to Tyr218–Ala237. The helical transmembrane segment at Phe238–Thr258 threads the bilayer. Residues Tyr259–Asp271 are Extracellular-facing. The chain crosses the membrane as a helical span at residues Gln272 to Leu292. The Cytoplasmic portion of the chain corresponds to Arg293 to Arg312.

The protein belongs to the G-protein coupled receptor 1 family.

It is found in the cell membrane. Odorant receptor. The polypeptide is Olfactory receptor 8H3 (OR8H3) (Homo sapiens (Human)).